The following is a 376-amino-acid chain: Dehydrogenase/reductase SDR family member FEY (376 aa).

The residue at position 2 (Ser2) is an N-acetylserine. Residue 61–85 (VVTGSTSGIGRETARQLAEAGAHVV) participates in NAD(+) binding. Substrate is bound at residue Ser199. Tyr227 acts as the Proton acceptor in catalysis.

This sequence belongs to the short-chain dehydrogenases/reductases (SDR) family. In terms of tissue distribution, expressed in roots, stems, leaves and flowers and, at lower levels, in siliques.

Functionally, putative oxidoreductase. Required for vegetative shoot apex development, especially during leaf positioning and for shoot apical meristem (SAM) maintenance. In Arabidopsis thaliana (Mouse-ear cress), this protein is Dehydrogenase/reductase SDR family member FEY.